Reading from the N-terminus, the 443-residue chain is Transcriptional adapter 2-alpha (443 aa).

Serine 6 carries the post-translational modification Phosphoserine. Residues 12-69 (SDKPPCRGCSSYLTEPYIKCAECGPPPFFLCLQCFTRGFEYKKHQSDHTYEIMTSDFP) form a ZZ-type zinc finger. Residues cysteine 17, cysteine 20, cysteine 31, cysteine 34, cysteine 42, cysteine 45, histidine 55, and histidine 59 each coordinate Zn(2+). The 53-residue stretch at 70–122 (VLDPSWTAQEEMALLEAVMDCGFGNWQDVANQMCTKTKEECEKHYMKHFINNP) folds into the SANT domain. Glycyl lysine isopeptide (Lys-Gly) (interchain with G-Cter in SUMO2) cross-links involve residues lysine 132 and lysine 138. The region spanning 356–443 (NSGRRSAPPL…LIREGYITKA (88 aa)) is the SWIRM domain. The DNA-binding element occupies 426–435 (KTRKIYDFLI).

Interacts with GCN5. Interacts with NR3C1. Associated with the P/CAF protein in the PCAF complex. Component of the PCAF complex, at least composed of TADA2L/ADA2, TADA3L/ADA3, TAF5L/PAF65-beta, TAF6L/PAF65-alpha, TAF10/TAFII30, TAF12/TAFII20, TAF9/TAFII31 and TRRAP. Component of the ADA2A-containing complex (ATAC), composed of KAT14, KAT2A, TADA2L, TADA3L, ZZ3, MBIP, WDR5, YEATS2, CCDC101 and DR1. Interacts with CCDC134.

Its subcellular location is the nucleus. The protein localises to the chromosome. Functionally, component of the ATAC complex, a complex with histone acetyltransferase activity on histones H3 and H4. Required for the function of some acidic activation domains, which activate transcription from a distant site. Binds double-stranded DNA. Binds dinucleosomes, probably at the linker region between neighboring nucleosomes. Plays a role in chromatin remodeling. May promote TP53/p53 'Lys-321' acetylation, leading to reduced TP53 stability and transcriptional activity. May also promote XRCC6 acetylation thus facilitating cell apoptosis in response to DNA damage. This Mus musculus (Mouse) protein is Transcriptional adapter 2-alpha (Tada2a).